Here is a 68-residue protein sequence, read N- to C-terminus: Small ribosomal subunit protein bS21 (68 aa).

It belongs to the bacterial ribosomal protein bS21 family.

In Cereibacter sphaeroides (strain ATCC 17029 / ATH 2.4.9) (Rhodobacter sphaeroides), this protein is Small ribosomal subunit protein bS21.